The primary structure comprises 426 residues: Vacuole membrane protein hfl11 (426 aa).

The next 5 helical transmembrane spans lie at 39-59 (SVVRILMMIVIYSSVSFLSVY), 73-93 (IYEAFALYCFFCLLIDYLGGE), 133-153 (GILQYTWLKPFLVIAVLLTKV), 172-192 (IGLVYNISITLSLYSLTTFWV), and 223-243 (VLSITNWLGLLNGTGWIYSLL). Residue S364 is modified to Phosphoserine. The interval 386–409 (LQFEIDDEMEPLYNQAKQMRYGDY) is ATG8-interacting region.

Belongs to the TMEM184 family. Interacts with atg8.

The protein localises to the vacuole membrane. Its function is as follows. Vacuole membrane protein that recruits ATG8 to facilitate the degradation of vacuolar integral membrane proteins during early-stationary vacuole turnover (EVT) when cells enter stationary phase. The polypeptide is Vacuole membrane protein hfl11 (Schizosaccharomyces pombe (strain 972 / ATCC 24843) (Fission yeast)).